A 276-amino-acid chain; its full sequence is MGLKRFKPVTPGRRFMVISDFSDITKTEPEKSLLAPLKKTGGRNHHGRVTVRHRGGGHKRRYRIIDFKRYDKAGIPAKVLAIEYDPNRSARIALLLYADGEKRYILAPKGVNVGDTLMSGPDAEIRPGNALPLEKIPVGTLVHNVEFTPGKGGQIARAAGTYCQIMAKEGNYALLRMPSGELRKVHIKCYATVGVVGNEDHKNEVHGKAGRVRWLGRRPHVRGVAMNPVDHPHGGGEGRGKGHHPTSPWGLPTKGYKTRRGKRPSDKFIVRRRNEA.

A disordered region spans residues 223–276; the sequence is GVAMNPVDHPHGGGEGRGKGHHPTSPWGLPTKGYKTRRGKRPSDKFIVRRRNEA. Composition is skewed to basic and acidic residues over residues 230-240 and 263-276; these read DHPHGGGEGRG and RPSD…RNEA.

This sequence belongs to the universal ribosomal protein uL2 family. As to quaternary structure, part of the 50S ribosomal subunit. Forms a bridge to the 30S subunit in the 70S ribosome.

In terms of biological role, one of the primary rRNA binding proteins. Required for association of the 30S and 50S subunits to form the 70S ribosome, for tRNA binding and peptide bond formation. It has been suggested to have peptidyltransferase activity; this is somewhat controversial. Makes several contacts with the 16S rRNA in the 70S ribosome. The polypeptide is Large ribosomal subunit protein uL2 (Thermotoga petrophila (strain ATCC BAA-488 / DSM 13995 / JCM 10881 / RKU-1)).